Reading from the N-terminus, the 116-residue chain is Nucleoid-associated protein P9215_00191 (116 aa).

It belongs to the YbaB/EbfC family. In terms of assembly, homodimer.

The protein resides in the cytoplasm. Its subcellular location is the nucleoid. Its function is as follows. Binds to DNA and alters its conformation. May be involved in regulation of gene expression, nucleoid organization and DNA protection. The chain is Nucleoid-associated protein P9215_00191 from Prochlorococcus marinus (strain MIT 9215).